A 140-amino-acid chain; its full sequence is Tumor protein D55 (140 aa).

Positions 1–28 are disordered; the sequence is MPHARTETSVGTYESHSTSELEDLTEPE. The segment covering 7–18 has biased composition (polar residues); the sequence is ETSVGTYESHST. The stretch at 28 to 57 forms a coiled coil; sequence EQRELKTKLTKLEAEIVTLRHVLAAKERRC.

The protein belongs to the TPD52 family. As to quaternary structure, interacts with TPD52L2. As to expression, specifically expressed in testis. Expressed at 5.6-fold higher levels in adult testis than in fetal testis.

This Homo sapiens (Human) protein is Tumor protein D55 (TPD52L3).